Consider the following 465-residue polypeptide: Cytochrome c peroxidase Ccp (465 aa).

Topologically, residues M1–R6 are cytoplasmic. Residues I7–W27 form a helical membrane-spanning segment. Over Y28 to Q465 the chain is Periplasmic. Cytochrome c domains follow at residues S42–R155, Q185–P287, and A337–N454. 11 residues coordinate heme c: C59, C62, H63, M125, C207, C210, H211, C351, C354, H355, and M429.

The recombinant enzyme lacking its transmembrane domain is a monomer in solution. Heme c serves as cofactor.

It is found in the cell inner membrane. With respect to regulation, does not require reductive activation for maximum activity, as peroxidatic heme is high-spin His/OH(-) 6-coordinated. Calcium ions are needed to attain maximum peroxidase activity. Cytochrome peroxidase that enables anaerobic respiration with H(2)O(2) as a terminal electron acceptor. It receives electrons from the quinol pool. Menaquinol is probably the electron donor in vivo. It can use menadiol (a menaquinol analog), hydroquinone, duroquinol and the artificial electron donor ABTS(2-) in vitro, but only menadiol and hydroquinone can efficiently transfer electrons to Ccp, maintaining the catalytic activity of the enzyme. It enables E.coli to grow on a nonfermentable carbon source when H(2)O(2) is supplied. Plays a role in the peroxide stress response under anaerobic conditions. However, it does not degrade H(2)O(2) quickly enough to lower the periplasmic H(2)O(2) level below that of the surrounding medium and protect the cell from its toxic effects. The protein is Cytochrome c peroxidase Ccp of Escherichia coli (strain K12).